Consider the following 159-residue polypeptide: Phosphopantetheine adenylyltransferase (159 aa).

Threonine 10 serves as a coordination point for substrate. Residues 10–11 (TF) and histidine 18 each bind ATP. The substrate site is built by lysine 42, methionine 74, and arginine 88. ATP contacts are provided by residues 89–91 (GLR), glutamate 99, and 124–130 (WSFISSS).

This sequence belongs to the bacterial CoaD family. Homohexamer. Requires Mg(2+) as cofactor.

It localises to the cytoplasm. The catalysed reaction is (R)-4'-phosphopantetheine + ATP + H(+) = 3'-dephospho-CoA + diphosphate. It functions in the pathway cofactor biosynthesis; coenzyme A biosynthesis; CoA from (R)-pantothenate: step 4/5. Functionally, reversibly transfers an adenylyl group from ATP to 4'-phosphopantetheine, yielding dephospho-CoA (dPCoA) and pyrophosphate. The chain is Phosphopantetheine adenylyltransferase from Escherichia coli O7:K1 (strain IAI39 / ExPEC).